The primary structure comprises 177 residues: Small ribosomal subunit protein bS16 (177 aa).

The interval 80–177 (GIIAMPANGS…AAEAPKEEAK (98 aa)) is disordered. Residues 107-122 (AAPAAAPKAEAAPAAE) are compositionally biased toward low complexity.

This sequence belongs to the bacterial ribosomal protein bS16 family.

This chain is Small ribosomal subunit protein bS16, found in Pelagibacter ubique (strain HTCC1062).